The sequence spans 208 residues: Outer-membrane lipoprotein carrier protein (208 aa).

An N-terminal signal peptide occupies residues 1 to 25; it reads MKKLFSAKLFSALVLSFSLFSTAHA.

It belongs to the LolA family. Monomer.

It localises to the periplasm. Functionally, participates in the translocation of lipoproteins from the inner membrane to the outer membrane. Only forms a complex with a lipoprotein if the residue after the N-terminal Cys is not an aspartate (The Asp acts as a targeting signal to indicate that the lipoprotein should stay in the inner membrane). This is Outer-membrane lipoprotein carrier protein from Vibrio campbellii (strain ATCC BAA-1116).